The chain runs to 593 residues: Pyruvate kinase isozyme A, chloroplastic (593 aa).

The interval D57–S94 is disordered. R144 serves as a coordination point for substrate. Residues N146, D178, and T179 each coordinate K(+). N146–H149 lines the ATP pocket. Mg(2+) is bound at residue E343. Substrate contacts are provided by G366, D367, and S399. D367 contributes to the Mg(2+) binding site.

This sequence belongs to the pyruvate kinase family. Requires Mg(2+) as cofactor. K(+) is required as a cofactor. In terms of tissue distribution, highest levels in roots. Also found in stems, leaves and flowers.

It is found in the plastid. The protein resides in the chloroplast. The enzyme catalyses pyruvate + ATP = phosphoenolpyruvate + ADP + H(+). It functions in the pathway carbohydrate degradation; glycolysis; pyruvate from D-glyceraldehyde 3-phosphate: step 5/5. This chain is Pyruvate kinase isozyme A, chloroplastic, found in Nicotiana tabacum (Common tobacco).